The following is a 246-amino-acid chain: E3 ubiquitin-protein ligase LubX (246 aa).

U-box domains lie at 36–109 and 131–204; these read TTPT…QTNY and EIPD…RKRE.

Interacts with host CLK1. Ubiquitinated in the presence of host E1 ubiquitin-activating enzyme, E2 ubiquitin-conjugating enzyme (UBE2D1 or UBE2D3) and ubiquitin.

The protein localises to the secreted. It is found in the host cell. The catalysed reaction is S-ubiquitinyl-[E2 ubiquitin-conjugating enzyme]-L-cysteine + [acceptor protein]-L-lysine = [E2 ubiquitin-conjugating enzyme]-L-cysteine + N(6)-ubiquitinyl-[acceptor protein]-L-lysine.. In terms of biological role, effector proteins function to alter host cell physiology and promote bacterial survival in host tissues. This protein is an E3 ubiquitin ligase that interferes with host's ubiquitination pathway. Acts in conjunction with host E2 ubiquitin-conjugating enzymes UBE2D1 (UBCH5A) or UBE2D3 (UBCH5C), and mediates polyubiquitination of host kinase CLK1. This Legionella pneumophila subsp. pneumophila (strain Philadelphia 1 / ATCC 33152 / DSM 7513) protein is E3 ubiquitin-protein ligase LubX (lubX).